Here is a 213-residue protein sequence, read N- to C-terminus: Ras-related protein RabK1 (213 aa).

14 to 21 (GDRMVGKL) lines the GTP pocket. The Effector region signature appears at 36–43 (GNSIPFDF). Residues 61 to 65 (NTHGS) and 119 to 122 (TKSD) contribute to the GTP site.

It belongs to the small GTPase superfamily. Rab family.

In Dictyostelium discoideum (Social amoeba), this protein is Ras-related protein RabK1 (rabK1).